The primary structure comprises 88 residues: UPF0335 protein WRi_003770 (88 aa).

This sequence belongs to the UPF0335 family.

The chain is UPF0335 protein WRi_003770 from Wolbachia sp. subsp. Drosophila simulans (strain wRi).